Consider the following 381-residue polypeptide: E3 ubiquitin-protein ligase At1g63170 (381 aa).

The disordered stretch occupies residues 1–23 (MSRETTTEATPLILTDGGGGRRS). 2 helical membrane passes run 74–94 (VVVL…AVLV) and 107–127 (VWII…CVEY). The disordered stretch occupies residues 135-161 (RRDLSPRSSSSSSSSSSSMDEEEGLGL). Residues 140 to 152 (PRSSSSSSSSSSS) are compositionally biased toward low complexity. A coiled-coil region spans residues 170 to 194 (LELGQLENENNSFAKHLESANTMIS). The next 3 helical transmembrane spans lie at 189 to 209 (ANTM…SSGG), 224 to 244 (IVFL…ACVI), and 245 to 265 (GIAV…VAEQ). The RING-type; atypical zinc finger occupies 325–366 (CCICLSAYEDETELRELPCGHHFHCGCVDKWLYINATCPLCK).

The protein resides in the membrane. The enzyme catalyses S-ubiquitinyl-[E2 ubiquitin-conjugating enzyme]-L-cysteine + [acceptor protein]-L-lysine = [E2 ubiquitin-conjugating enzyme]-L-cysteine + N(6)-ubiquitinyl-[acceptor protein]-L-lysine.. It functions in the pathway protein modification; protein ubiquitination. Functionally, mediates E2-dependent protein ubiquitination. In Arabidopsis thaliana (Mouse-ear cress), this protein is E3 ubiquitin-protein ligase At1g63170.